A 593-amino-acid chain; its full sequence is A-type ATP synthase subunit A (593 aa).

Gly236–Thr243 is an ATP binding site.

It belongs to the ATPase alpha/beta chains family. As to quaternary structure, has multiple subunits with at least A(3), B(3), C, D, E, F, H, I and proteolipid K(x).

The protein resides in the cell membrane. It catalyses the reaction ATP + H2O + 4 H(+)(in) = ADP + phosphate + 5 H(+)(out). Functionally, produces ATP from ADP in the presence of a proton gradient across the membrane. The archaeal alpha chain is a catalytic subunit. Component of the A-type ATP synthase that produces ATP from ADP in the presence of a proton gradient across the membrane. The A chain is the catalytic subunit. The polypeptide is A-type ATP synthase subunit A (Pyrobaculum aerophilum (strain ATCC 51768 / DSM 7523 / JCM 9630 / CIP 104966 / NBRC 100827 / IM2)).